Here is a 181-residue protein sequence, read N- to C-terminus: CASP-like protein 1F1 (181 aa).

The Cytoplasmic segment spans residues 1-18 (MPNNEAKFSVNQPLKTQK). The helical transmembrane segment at 19–39 (LFIGVQIFFRIVAIAASVASS) threads the bilayer. Residues 40-70 (WLMITSKQVIDIGGIVLDARYSYSPEFKFLA) are Extracellular-facing. The helical transmembrane segment at 71-91 (FTNIVVGCFSLLSLLFLVLVV) threads the bilayer. Over 92–100 (RQGSNPNHY) the chain is Cytoplasmic. Residues 101–121 (FFLFLHDLAMMSLVVGGCAAA) form a helical membrane-spanning segment. The Extracellular segment spans residues 122–152 (TTVGFLGKHGNSHTGWMQICDNFGKFCNRAQ). The helical transmembrane segment at 153–173 (TSVTISYLNLICLSILTITSA) threads the bilayer. Residues 174-181 (SKSRKMEA) lie on the Cytoplasmic side of the membrane.

The protein belongs to the Casparian strip membrane proteins (CASP) family. In terms of assembly, homodimer and heterodimers.

The protein resides in the cell membrane. In Populus trichocarpa (Western balsam poplar), this protein is CASP-like protein 1F1.